Here is a 186-residue protein sequence, read N- to C-terminus: Interferon beta (186 aa).

A signal peptide spans 1–21; the sequence is MTGRCILQIALLVCFFTTAHS. Position 24 is a phosphotyrosine (Y24). N-linked (GlcNAc...) asparagine glycans are attached at residues N46, N101, N131, and N136. A disulfide bridge connects residues C52 and C161.

It belongs to the alpha/beta interferon family. As to quaternary structure, monomer.

The protein resides in the secreted. In terms of biological role, type I interferon cytokine that plays a key role in the innate immune response to infection, developing tumors and other inflammatory stimuli. Signals via binding to high-affinity (IFNAR2) and low-affinity (IFNAR1) heterodimeric receptor, activating the canonical Jak-STAT signaling pathway resulting in transcriptional activation or repression of interferon-regulated genes that encode the effectors of the interferon response, such as antiviral proteins, regulators of cell proliferation and differentiation, and immunoregulatory proteins. Signals mostly via binding to a IFNAR1-IFNAR2 heterodimeric receptor, but can also function with IFNAR1 alone and independently of Jak-STAT pathways. Elicits a wide variety of responses, including antiviral and antibacterial activities, and can regulate the development of B-cells, myelopoiesis and lipopolysaccharide (LPS)-inducible production of tumor necrosis factor. Plays a role in neuronal homeostasis by regulating dopamine turnover and protecting dopaminergic neurons: acts by promoting neuronal autophagy and alpha-synuclein clearance, thereby preventing dopaminergic neuron loss. IFNB1 is more potent than interferon-alpha (IFN-alpha) in inducing the apoptotic and antiproliferative pathways required for control of tumor cell growth. The polypeptide is Interferon beta (IFNB1) (Felis catus (Cat)).